The chain runs to 373 residues: tRNA-specific 2-thiouridylase MnmA (373 aa).

ATP-binding positions include 12 to 19 (GMSGGVDS) and M38. The segment at 98–100 (NPD) is interaction with target base in tRNA. Catalysis depends on C103, which acts as the Nucleophile. A disulfide bond links C103 and C200. Residue G127 coordinates ATP. The segment at 150 to 152 (KDQ) is interaction with tRNA. C200 functions as the Cysteine persulfide intermediate in the catalytic mechanism. Positions 312–313 (RY) are interaction with tRNA.

Belongs to the MnmA/TRMU family.

It localises to the cytoplasm. The catalysed reaction is S-sulfanyl-L-cysteinyl-[protein] + uridine(34) in tRNA + AH2 + ATP = 2-thiouridine(34) in tRNA + L-cysteinyl-[protein] + A + AMP + diphosphate + H(+). Its function is as follows. Catalyzes the 2-thiolation of uridine at the wobble position (U34) of tRNA, leading to the formation of s(2)U34. The sequence is that of tRNA-specific 2-thiouridylase MnmA from Streptococcus pneumoniae (strain JJA).